The primary structure comprises 140 residues: uncharacterized protein (140 aa).

One can recognise an HTH cro/C1-type domain in the interval 26-80 (IRSQRETAHVSMRQLAERSGVSNPYLSQVERGLRKPSADVLSQIAKALRVSAEVL). Residues 37–56 (MRQLAERSGVSNPYLSQVER) constitute a DNA-binding region (H-T-H motif).

This is an uncharacterized protein from Mycobacterium tuberculosis (strain ATCC 25618 / H37Rv).